The following is a 262-amino-acid chain: Diaminopimelate epimerase (262 aa).

Substrate-binding residues include Asn-17, Gln-45, and Asn-63. The active-site Proton donor is Cys-72. Residues 73 to 74, Asn-154, Asn-187, and 205 to 206 contribute to the substrate site; these read GN and ER. Catalysis depends on Cys-214, which acts as the Proton acceptor. Residue 215-216 coordinates substrate; it reads GS.

This sequence belongs to the diaminopimelate epimerase family. In terms of assembly, homodimer.

Its subcellular location is the cytoplasm. It catalyses the reaction (2S,6S)-2,6-diaminopimelate = meso-2,6-diaminopimelate. The protein operates within amino-acid biosynthesis; L-lysine biosynthesis via DAP pathway; DL-2,6-diaminopimelate from LL-2,6-diaminopimelate: step 1/1. In terms of biological role, catalyzes the stereoinversion of LL-2,6-diaminopimelate (L,L-DAP) to meso-diaminopimelate (meso-DAP), a precursor of L-lysine and an essential component of the bacterial peptidoglycan. The polypeptide is Diaminopimelate epimerase (Wolbachia sp. subsp. Drosophila simulans (strain wRi)).